Here is a 349-residue protein sequence, read N- to C-terminus: S-adenosylmethionine:tRNA ribosyltransferase-isomerase (349 aa).

It belongs to the QueA family. In terms of assembly, monomer.

It is found in the cytoplasm. It carries out the reaction 7-aminomethyl-7-carbaguanosine(34) in tRNA + S-adenosyl-L-methionine = epoxyqueuosine(34) in tRNA + adenine + L-methionine + 2 H(+). It participates in tRNA modification; tRNA-queuosine biosynthesis. Its function is as follows. Transfers and isomerizes the ribose moiety from AdoMet to the 7-aminomethyl group of 7-deazaguanine (preQ1-tRNA) to give epoxyqueuosine (oQ-tRNA). In Azotobacter vinelandii (strain DJ / ATCC BAA-1303), this protein is S-adenosylmethionine:tRNA ribosyltransferase-isomerase.